The primary structure comprises 367 residues: Probable peptidoglycan glycosyltransferase FtsW (367 aa).

Residues 1–8 (MRRVEGYD) lie on the Cytoplasmic side of the membrane. Residues 9-29 (MIVLMMAVILTCFGVVMVYSA) form a helical membrane-spanning segment. Over 30–49 (SSVMAAKKFHDGFFFLKRQS) the chain is Periplasmic. Residues 50-70 (LYALIGFIGMGVAMHVDYHVW) traverse the membrane as a helical segment. The Cytoplasmic portion of the chain corresponds to 71-72 (KK). Residues 73–93 (WAVPLFLGTFFLLLLVFVPGI) form a helical membrane-spanning segment. At 94 to 138 (GGTAKGASRWIRLPGFNFQPSELAKVALIMYMAYSLEKRQDKLKQ) the chain is on the periplasmic side. Residues 139-159 (FMSGFFPYMLILGVFIAVLLA) traverse the membrane as a helical segment. Over 160–161 (QH) the chain is Cytoplasmic. A helical membrane pass occupies residues 162 to 182 (DMGAALTMLAVAIVMLFAAGT). Residue lysine 183 is a topological domain, periplasmic. Residues 184-204 (VQYILGMGLVALPGICYLVFT) form a helical membrane-spanning segment. The Cytoplasmic segment spans residues 205 to 225 (KAYRMRRITAFLDPWQDPTDA). A helical membrane pass occupies residues 226–246 (GFQIIQSWLALGTGGFFGQGL). Residues 247-266 (GEGKQKLFYLPEAHTDFILS) are Periplasmic-facing. Residues 267-287 (VLGEEMGFIGVVVIASMFLLL) traverse the membrane as a helical segment. Residues 288–304 (VQRSIRVAIAAEDSFGR) lie on the Cytoplasmic side of the membrane. Residues 305-325 (FLAFGIAILLGLEAFVNMAVV) form a helical membrane-spanning segment. Topologically, residues 326 to 335 (TGLLPTKGIA) are periplasmic. A helical membrane pass occupies residues 336–356 (LPFLSYGGSSLIISLCSVGVL). Over 357–367 (LNVSTRMRGAA) the chain is Cytoplasmic.

This sequence belongs to the SEDS family. FtsW subfamily.

It localises to the cell inner membrane. It catalyses the reaction [GlcNAc-(1-&gt;4)-Mur2Ac(oyl-L-Ala-gamma-D-Glu-L-Lys-D-Ala-D-Ala)](n)-di-trans,octa-cis-undecaprenyl diphosphate + beta-D-GlcNAc-(1-&gt;4)-Mur2Ac(oyl-L-Ala-gamma-D-Glu-L-Lys-D-Ala-D-Ala)-di-trans,octa-cis-undecaprenyl diphosphate = [GlcNAc-(1-&gt;4)-Mur2Ac(oyl-L-Ala-gamma-D-Glu-L-Lys-D-Ala-D-Ala)](n+1)-di-trans,octa-cis-undecaprenyl diphosphate + di-trans,octa-cis-undecaprenyl diphosphate + H(+). The protein operates within cell wall biogenesis; peptidoglycan biosynthesis. Its function is as follows. Peptidoglycan polymerase that is essential for cell division. The protein is Probable peptidoglycan glycosyltransferase FtsW of Geobacter sp. (strain M18).